A 205-amino-acid chain; its full sequence is Phosphoenolpyruvate guanylyltransferase (205 aa).

3 residues coordinate phosphoenolpyruvate: threonine 138, glycine 154, and serine 157.

The protein belongs to the CofC family.

It carries out the reaction phosphoenolpyruvate + GTP + H(+) = enolpyruvoyl-2-diphospho-5'-guanosine + diphosphate. It functions in the pathway cofactor biosynthesis; coenzyme F420 biosynthesis. In terms of biological role, guanylyltransferase that catalyzes the activation of phosphoenolpyruvate (PEP) as enolpyruvoyl-2-diphospho-5'-guanosine, via the condensation of PEP with GTP. It is involved in the biosynthesis of coenzyme F420, a hydride carrier cofactor. This chain is Phosphoenolpyruvate guanylyltransferase, found in Chloroflexus aurantiacus (strain ATCC 29364 / DSM 637 / Y-400-fl).